The following is an 843-amino-acid chain: MASFFQQSLATGWSFKDAEDNSAEAWMPVAQVPSVVHQDLIANNKLQDPYVGFRELDARWVNEKSWTYRTVFQKPAVPAGSSVILAFDGLDTFAKVKLNGNVILESNNMFLAHRIDVTKALGADGDHVLEIDFDCAMLRARELRAKDPQHKWVGFNGDPARMGVRKAQYHWGWDWGPVLMTAGIWRDVRLEVYTARVADLWTETDLAVDHHAAQISAFAQVEGAISSSKVNFILSLHGQEVARAVAEPQDQVAKVAFDVQQPSLWWPNGYGDPTLYEISATLDQDGATVHQISKKIGIRTAEVVQRPDKHGKSFFFRINGVDIFCGGSCWIPADNLLPSISAERYRKWIELMVHGRQVMIRVWGGGCYEDDSFYQACDELGVMVWQDFMFGCGNYPTWPEMLESVEKEAIYNVRRLRHHPSIVVYVGNNEDYQVQEQQGLTYNFEDKDPQNWLKSDFPARYIYEKILPEVVQRYSPSTFYHPGSPWGDGKITSDPTVGDMHQWNVWHGTQEKYQIFDTLGGRFNSEFGMEAFPHMSTIEYFVENEKDKYPQSHVLDFHNKADGHERRIATYLVENLRTATDLETYIYLTQVVQAETMMFGYRGWRRQWGDERHCGGALLWQLNDCWPTISWAIVDYFLRPKPAFYAVARVLNPIAVGVRREHHDWSVTHAQPPKKSKFELWVASNLQKETRGMVELKFLSVDTGREIRERIVREDVIIVPNGTTDIIVDGVIDHQEYAEPHVLAARLWVDGKIVARDVDWPQPFKYLDLSGRGLEVKTVSTSDDQQTLLISAQKPVKCLVFEERDGVRVSDSAMDIVPGDEQTVTITGLKADAPPLKYKYLGQ.

Glutamate 430 (proton donor) is an active-site residue. The N-linked (GlcNAc...) asparagine glycan is linked to asparagine 721.

The protein belongs to the glycosyl hydrolase 2 family. Beta-mannosidase B subfamily.

It catalyses the reaction Hydrolysis of terminal, non-reducing beta-D-mannose residues in beta-D-mannosides.. It participates in glycan metabolism; N-glycan degradation. Its function is as follows. Exoglycosidase that cleaves the single beta-linked mannose residue from the non-reducing end of beta-mannosidic oligosaccharides of various complexity and length. Prefers mannobiose over mannotriose and has no activity against polymeric mannan. Is also severely restricted by galactosyl substitutions at the +1 subsite. In Aspergillus terreus (strain NIH 2624 / FGSC A1156), this protein is Beta-mannosidase B (mndB).